The chain runs to 386 residues: 8-amino-7-oxononanoate synthase (386 aa).

Arginine 20 contacts substrate. Residue 107–108 coordinates pyridoxal 5'-phosphate; sequence GY. Residue histidine 132 participates in substrate binding. Residues serine 178, histidine 206, and threonine 234 each contribute to the pyridoxal 5'-phosphate site. Residue lysine 237 is modified to N6-(pyridoxal phosphate)lysine. Threonine 351 lines the substrate pocket.

This sequence belongs to the class-II pyridoxal-phosphate-dependent aminotransferase family. BioF subfamily. Homodimer. The cofactor is pyridoxal 5'-phosphate.

It catalyses the reaction 6-carboxyhexanoyl-[ACP] + L-alanine + H(+) = (8S)-8-amino-7-oxononanoate + holo-[ACP] + CO2. It participates in cofactor biosynthesis; biotin biosynthesis. In terms of biological role, catalyzes the decarboxylative condensation of pimeloyl-[acyl-carrier protein] and L-alanine to produce 8-amino-7-oxononanoate (AON), [acyl-carrier protein], and carbon dioxide. The sequence is that of 8-amino-7-oxononanoate synthase from Aromatoleum aromaticum (strain DSM 19018 / LMG 30748 / EbN1) (Azoarcus sp. (strain EbN1)).